We begin with the raw amino-acid sequence, 71 residues long: Translation initiation factor IF-1 (71 aa).

Residues Met-1–Arg-71 enclose the S1-like domain.

This sequence belongs to the IF-1 family. As to quaternary structure, component of the 30S ribosomal translation pre-initiation complex which assembles on the 30S ribosome in the order IF-2 and IF-3, IF-1 and N-formylmethionyl-tRNA(fMet); mRNA recruitment can occur at any time during PIC assembly.

The protein resides in the cytoplasm. In terms of biological role, one of the essential components for the initiation of protein synthesis. Stabilizes the binding of IF-2 and IF-3 on the 30S subunit to which N-formylmethionyl-tRNA(fMet) subsequently binds. Helps modulate mRNA selection, yielding the 30S pre-initiation complex (PIC). Upon addition of the 50S ribosomal subunit IF-1, IF-2 and IF-3 are released leaving the mature 70S translation initiation complex. In Buchnera aphidicola subsp. Cinara cedri (strain Cc), this protein is Translation initiation factor IF-1.